The primary structure comprises 159 residues: Ribosomal RNA large subunit methyltransferase H (159 aa).

S-adenosyl-L-methionine-binding positions include leucine 76, glycine 108, and 127-132 (LSKMTY).

This sequence belongs to the RNA methyltransferase RlmH family. As to quaternary structure, homodimer.

It is found in the cytoplasm. It catalyses the reaction pseudouridine(1915) in 23S rRNA + S-adenosyl-L-methionine = N(3)-methylpseudouridine(1915) in 23S rRNA + S-adenosyl-L-homocysteine + H(+). In terms of biological role, specifically methylates the pseudouridine at position 1915 (m3Psi1915) in 23S rRNA. This is Ribosomal RNA large subunit methyltransferase H from Ruminiclostridium cellulolyticum (strain ATCC 35319 / DSM 5812 / JCM 6584 / H10) (Clostridium cellulolyticum).